A 274-amino-acid polypeptide reads, in one-letter code: MADMHSLFIAFVLGVVEGLTEFLPVSSTGHMIIVGEWLGFTGDKAKTFEVIIQLGSILAVVVMFWRRLFGLIGIHFGGKPVEHEGKTTGHLKLGHILLAMIPAVVLGLLFHDVIKSLFAPKNVMYALVVGGFLLLAAEWLKPKKPSAEGLDDITYRQAFMIGCFQCLALWPGFSRSGSTIAGGMLVGVNRYAAAEFSFILAVPMMIGASGLDLYKSLHFLTMGDLPMFAVGFATAFVVALIAIKTFLTLIKRISFVPFAIYRFIVAGVVYMVFM.

8 helical membrane passes run 6-26, 45-65, 94-114, 117-137, 155-174, 191-211, 223-243, and 253-273; these read SLFI…LPVS, AKTF…VMFW, GHIL…HDVI, LFAP…LLAA, YRQA…PGFS, YAAA…ASGL, GDLP…LIAI, and ISFV…YMVF.

Belongs to the UppP family.

Its subcellular location is the cell inner membrane. It carries out the reaction di-trans,octa-cis-undecaprenyl diphosphate + H2O = di-trans,octa-cis-undecaprenyl phosphate + phosphate + H(+). Functionally, catalyzes the dephosphorylation of undecaprenyl diphosphate (UPP). Confers resistance to bacitracin. The polypeptide is Undecaprenyl-diphosphatase (Serratia proteamaculans (strain 568)).